The sequence spans 297 residues: CASP-like protein 4A2 (297 aa).

The tract at residues 1–136 (MKMKRTVSSN…MNGEESATTA (136 aa)) is disordered. Residues 1–149 (MKMKRTVSSN…ARRDDLVSVT (149 aa)) are Cytoplasmic-facing. Over residues 8-19 (SSNSEAYSYNES) the composition is skewed to low complexity. Residues 69–83 (LPSPIPPPPPQIPPP) are compositionally biased toward pro residues. A compositionally biased stretch (polar residues) spans 93–121 (MNSSLDKSPSSMVVQNSWVREDGQQNTTR). Residues 150–170 (ALGFRITEVILCVISFSIMAA) traverse the membrane as a helical segment. The Extracellular segment spans residues 171-189 (DKTQGWSGDSYDRYKEYRY). The helical transmembrane segment at 190 to 210 (CLAVNVIAFVYSAFEACDAAC) threads the bilayer. Topologically, residues 211–225 (YMAKESYMMNCGFHD) are cytoplasmic. A helical membrane pass occupies residues 226 to 246 (LFVFSMDQLLAYLLMSASSCA). Residues 247-265 (ATRVDDWVSNWGKDEFTQM) lie on the Extracellular side of the membrane. A helical membrane pass occupies residues 266 to 286 (ATASIAVSFLAFGAFAVSALI). The Cytoplasmic segment spans residues 287–297 (SSYRLFTHASS).

It belongs to the Casparian strip membrane proteins (CASP) family. Homodimer and heterodimers.

It is found in the cell membrane. This chain is CASP-like protein 4A2, found in Arabidopsis lyrata subsp. lyrata (Lyre-leaved rock-cress).